A 259-amino-acid polypeptide reads, in one-letter code: 5'-nucleotidase SurE (259 aa).

Residues D8, D9, S40, and N95 each contribute to the a divalent metal cation site.

The protein belongs to the SurE nucleotidase family. It depends on a divalent metal cation as a cofactor.

The protein resides in the cytoplasm. The enzyme catalyses a ribonucleoside 5'-phosphate + H2O = a ribonucleoside + phosphate. Its function is as follows. Nucleotidase that shows phosphatase activity on nucleoside 5'-monophosphates. This is 5'-nucleotidase SurE from Oleidesulfovibrio alaskensis (strain ATCC BAA-1058 / DSM 17464 / G20) (Desulfovibrio alaskensis).